The sequence spans 138 residues: MGNLARFGVSLDQDLLEPFDELCRRKSYPNRSEAIRDLIRKALVEEKWNSDAHGAGTLTLVYDHHKNDLSRRLVQIQHDDHDLIVTTLHVHLDHYNCLEVLVLKGEPKRMRALADKLIACRGVKHGTFTGTTTGEDLA.

Ni(2+) contacts are provided by His78, His89, His91, and Cys97.

This sequence belongs to the transcriptional regulatory CopG/NikR family. Ni(2+) serves as cofactor.

In terms of biological role, transcriptional regulator. The polypeptide is Putative nickel-responsive regulator (Desulfovibrio desulfuricans (strain ATCC 27774 / DSM 6949 / MB)).